The following is a 371-amino-acid chain: uncharacterized protein (371 aa).

The protein belongs to the serpin family.

This is an uncharacterized protein from Pyrobaculum aerophilum (strain ATCC 51768 / DSM 7523 / JCM 9630 / CIP 104966 / NBRC 100827 / IM2).